Here is a 339-residue protein sequence, read N- to C-terminus: Phenylalanine--tRNA ligase alpha subunit (339 aa).

Mg(2+) is bound at residue Glu-262.

This sequence belongs to the class-II aminoacyl-tRNA synthetase family. Phe-tRNA synthetase alpha subunit type 1 subfamily. As to quaternary structure, tetramer of two alpha and two beta subunits. Mg(2+) is required as a cofactor.

It is found in the cytoplasm. It catalyses the reaction tRNA(Phe) + L-phenylalanine + ATP = L-phenylalanyl-tRNA(Phe) + AMP + diphosphate + H(+). The sequence is that of Phenylalanine--tRNA ligase alpha subunit from Neisseria gonorrhoeae (strain ATCC 700825 / FA 1090).